Consider the following 205-residue polypeptide: Outer-membrane lipoprotein carrier protein (205 aa).

The signal sequence occupies residues 1–22 (MKKTTLKFAALTLLGLSNLALA).

Belongs to the LolA family. In terms of assembly, monomer.

Its subcellular location is the periplasm. Its function is as follows. Participates in the translocation of lipoproteins from the inner membrane to the outer membrane. Only forms a complex with a lipoprotein if the residue after the N-terminal Cys is not an aspartate (The Asp acts as a targeting signal to indicate that the lipoprotein should stay in the inner membrane). The polypeptide is Outer-membrane lipoprotein carrier protein (Haemophilus influenzae (strain PittEE)).